We begin with the raw amino-acid sequence, 510 residues long: NAD(P)H-quinone oxidoreductase subunit 2 B, chloroplastic (510 aa).

Helical transmembrane passes span 24-44 (LLLFHGSFIFPECILIFGLIL), 57-77 (IPWLYFISSTSLVMSITALLF), 99-119 (IFQFLILLCSTLCIPLSVEYI), 124-144 (MAITEFLLFVLTATLGGMFLC), 183-203 (YLLMGGASSSILVHGFSWLYG), 227-247 (PGISIALISITVGIGFKLSPA), 295-315 (WHLLLEILAILSMILGNLIAI), 323-343 (MLAYSSIGQIGYVIIGIIVGD), 347-367 (GYASMITYMLFYISMNLGTFA), 395-415 (ALSSALCLLSLGGLPPLAGFF), 418-438 (LHLFWCGWQAGLYFLVSIGLL), and 484-504 (MIVCVIASTIPGISMNPIIAI).

The protein belongs to the complex I subunit 2 family. As to quaternary structure, NDH is composed of at least 16 different subunits, 5 of which are encoded in the nucleus.

The protein localises to the plastid. Its subcellular location is the chloroplast thylakoid membrane. It catalyses the reaction a plastoquinone + NADH + (n+1) H(+)(in) = a plastoquinol + NAD(+) + n H(+)(out). It carries out the reaction a plastoquinone + NADPH + (n+1) H(+)(in) = a plastoquinol + NADP(+) + n H(+)(out). NDH shuttles electrons from NAD(P)H:plastoquinone, via FMN and iron-sulfur (Fe-S) centers, to quinones in the photosynthetic chain and possibly in a chloroplast respiratory chain. The immediate electron acceptor for the enzyme in this species is believed to be plastoquinone. Couples the redox reaction to proton translocation, and thus conserves the redox energy in a proton gradient. In Calycanthus floridus var. glaucus (Eastern sweetshrub), this protein is NAD(P)H-quinone oxidoreductase subunit 2 B, chloroplastic.